The sequence spans 534 residues: Kelch repeat and BTB domain-containing protein 4 (534 aa).

Residues 61–128 form the BTB domain; the sequence is ADVTISVEGR…IYHGTVKLRA (68 aa). Residues 163 to 255 enclose the BACK domain; it reads CLQVMWLADR…SLKEIGENVH (93 aa). 5 Kelch repeats span residues 255–301, 302–344, 347–394, 396–446, and 448–497; these read HIYL…KHGG, DLYV…SVPG, AIYS…NLNG, IYLL…VHKD, and VFIV…VFRD.

In terms of assembly, component of the BCR(KBTBD4) E3 ubiquitin ligase complex, at least composed of CUL3, KBTBD4 and RBX1.

Functionally, substrate-specific adapter of a BCR (BTB-CUL3-RBX1) E3 ubiquitin ligase complex which targets CoREST corepressor complex components RCOR1, KDM1A/LSD1 and HDAC2 for proteasomal degradation. RCOR1 is likely to be the primary target while degradation of KDM1A and HDAC2 is likely due to their association with RCOR1. Also targets RCOR3, MIER2 and MIER3 for proteasomal degradation as well as associated proteins ZNF217 and RREB1. Degradation is dependent on the presence of an ELM2 domain in the target proteins. In Mus musculus (Mouse), this protein is Kelch repeat and BTB domain-containing protein 4 (Kbtbd4).